The following is a 319-amino-acid chain: Pantothenate kinase (319 aa).

ATP is bound at residue 101–108; sequence GSVAVGKS.

The protein belongs to the prokaryotic pantothenate kinase family.

The protein resides in the cytoplasm. It carries out the reaction (R)-pantothenate + ATP = (R)-4'-phosphopantothenate + ADP + H(+). It participates in cofactor biosynthesis; coenzyme A biosynthesis; CoA from (R)-pantothenate: step 1/5. In Clavibacter michiganensis subsp. michiganensis (strain NCPPB 382), this protein is Pantothenate kinase.